The following is a 193-amino-acid chain: uncharacterized protein (193 aa).

The N-terminal stretch at 1 to 14 is a signal peptide; sequence MSTSLLFSLSPSSS.

This is an uncharacterized protein from Saccharomyces cerevisiae (strain ATCC 204508 / S288c) (Baker's yeast).